The sequence spans 474 residues: Probable threonine--tRNA ligase, mitochondrial (474 aa).

Residues 1–27 constitute a mitochondrion transit peptide; that stretch reads MMKLKKFQLHTPFAHSCNRVEIYTARF.

The protein belongs to the class-II aminoacyl-tRNA synthetase family.

It localises to the mitochondrion matrix. It catalyses the reaction tRNA(Thr) + L-threonine + ATP = L-threonyl-tRNA(Thr) + AMP + diphosphate + H(+). The protein is Probable threonine--tRNA ligase, mitochondrial of Schizosaccharomyces pombe (strain 972 / ATCC 24843) (Fission yeast).